Consider the following 284-residue polypeptide: MYKKIGIIYHPLNPAACDLAIKLAAKLDSLGIENWSDSAWQADKLTPKMQNTQLILTTGGDGTILRTAHAILPLEIPILSVNLGKVGFMTELSPEDAISGLEKVLAGDGWIDERSLLEAEYLPHDSAQSRQFFVMNDAVVARGQVARVICVSVDINSQPFTTYKADGAIVSTATGSTGYSYAAGGPVLQPNSADIILTPILPHLGRGYSLVLPSDSIVDLKVNTWHEATLSIDGFINMQVSSGDTLRLRQSSKKIQFIRLRPENYFYKGLDTKLKGNNESVYDR.

D61 (proton acceptor) is an active-site residue. NAD(+) is bound by residues 61–62 (DG), R66, 136–137 (ND), R147, K164, D166, and L201.

This sequence belongs to the NAD kinase family. Requires a divalent metal cation as cofactor.

The protein resides in the cytoplasm. The enzyme catalyses NAD(+) + ATP = ADP + NADP(+) + H(+). Functionally, involved in the regulation of the intracellular balance of NAD and NADP, and is a key enzyme in the biosynthesis of NADP. Catalyzes specifically the phosphorylation on 2'-hydroxyl of the adenosine moiety of NAD to yield NADP. This chain is NAD kinase, found in Dehalococcoides mccartyi (strain ATCC BAA-2100 / JCM 16839 / KCTC 5957 / BAV1).